The following is a 127-amino-acid chain: Fluoride-specific ion channel FluC (127 aa).

4 consecutive transmembrane segments (helical) span residues 4-24 (LDYLTIAFGGAIGAVLRYLVS), 39-59 (GTIIVNSVGSFFLSFLMFAAI), 68-88 (AILFFGTGLLGAFTTFSTFTY), and 102-122 (VAYALVNLLFAFTCAYFGMIL). 2 residues coordinate Na(+): Gly-78 and Thr-81.

It belongs to the fluoride channel Fluc/FEX (TC 1.A.43) family.

It localises to the cell inner membrane. It carries out the reaction fluoride(in) = fluoride(out). With respect to regulation, na(+) is not transported, but it plays an essential structural role and its presence is essential for fluoride channel function. In terms of biological role, fluoride-specific ion channel. Important for reducing fluoride concentration in the cell, thus reducing its toxicity. This is Fluoride-specific ion channel FluC from Thermotoga petrophila (strain ATCC BAA-488 / DSM 13995 / JCM 10881 / RKU-1).